A 393-amino-acid polypeptide reads, in one-letter code: Phosphopentomutase (393 aa).

Residues aspartate 15, aspartate 288, histidine 293, aspartate 329, histidine 330, and histidine 341 each contribute to the Mn(2+) site.

This sequence belongs to the phosphopentomutase family. Requires Mn(2+) as cofactor.

Its subcellular location is the cytoplasm. The catalysed reaction is 2-deoxy-alpha-D-ribose 1-phosphate = 2-deoxy-D-ribose 5-phosphate. The enzyme catalyses alpha-D-ribose 1-phosphate = D-ribose 5-phosphate. Its pathway is carbohydrate degradation; 2-deoxy-D-ribose 1-phosphate degradation; D-glyceraldehyde 3-phosphate and acetaldehyde from 2-deoxy-alpha-D-ribose 1-phosphate: step 1/2. Functionally, isomerase that catalyzes the conversion of deoxy-ribose 1-phosphate (dRib-1-P) and ribose 1-phosphate (Rib-1-P) to deoxy-ribose 5-phosphate (dRib-5-P) and ribose 5-phosphate (Rib-5-P), respectively. In Halalkalibacterium halodurans (strain ATCC BAA-125 / DSM 18197 / FERM 7344 / JCM 9153 / C-125) (Bacillus halodurans), this protein is Phosphopentomutase.